The primary structure comprises 455 residues: Acetylcholinesterase collagenic tail peptide (455 aa).

Residues 1 to 22 (MVVLNPMTLGIYLQLFFLSIVS) form the signal peptide. The tract at residues 51-67 (CCLLTPPPPPLFPPPFF) is PRAD. Residues 90 to 282 (QSPCMQGSLG…QLIMGPKGER (193 aa)) form a disordered region. 2 Collagen-like domains span residues 96-269 (GSLG…PGPP) and 277-291 (GPKG…PGRC). Positions 101-112 (PGPPGPQGPPGL) are enriched in pro residues. Residues 118 to 127 (PKGEKGELGR) are compositionally biased toward basic and acidic residues. Residues 130 to 133 (RKGR) are heparan sulfate proteoglycan binding. Positions 134 to 152 (PGPPGVPGMPGPIGWPGPE) are enriched in pro residues. Over residues 182–200 (RGEKGSRGEKGDLGPKGEK) the composition is skewed to basic and acidic residues. Positions 235-238 (KRGK) are heparan sulfate proteoglycan binding. Over residues 262-271 (RPGPPGPPPA) the composition is skewed to pro residues.

Belongs to the COLQ family. Homotrimer. Component of the asymmetric form of AChE, a disulfide-bonded oligomer composed of the collagenic subunits (Q) and a variable number of asymmetric catalytic subunits (T). The N-terminal of a collagenic subunit (Q) associates with the C-terminal of a catalytic subunit (T). In terms of processing, the triple-helical tail is stabilized by disulfide bonds at each end. In terms of tissue distribution, found at the end plate of skeletal muscle.

It is found in the synapse. In terms of biological role, anchors the catalytic subunits of asymmetric AChE to the synaptic basal lamina. The sequence is that of Acetylcholinesterase collagenic tail peptide (COLQ) from Homo sapiens (Human).